Consider the following 432-residue polypeptide: DnaJ-like protein 1 (432 aa).

Residues 4–73 (DTEYYDLLGV…RAKYDKYGRK (70 aa)) form the J domain. The interval 117–187 (NAEDEAEKEK…KKNEQVGAEA (71 aa)) is disordered.

Belongs to the DnaJ family. Interacts with SLN1.

Its subcellular location is the cytoplasm. In terms of biological role, required for peroxisomal protein import which maintains the function of peroxisomes. The polypeptide is DnaJ-like protein 1 (DJP1) (Saccharomyces cerevisiae (strain ATCC 204508 / S288c) (Baker's yeast)).